A 470-amino-acid polypeptide reads, in one-letter code: 6-phosphofructo-2-kinase/fructose-2,6-bisphosphatase (470 aa).

Positions 1 to 249 (MAAVASGQLT…VYYLMNTHVT (249 aa)) are 6-phosphofructo-2-kinase. Serine 31 is subject to Phosphoserine; by PKA. 47-55 (GLRRPGKTY) contributes to the ATP binding site. Beta-D-fructose 6-phosphate is bound by residues arginine 80 and arginine 104. The active site involves aspartate 130. Beta-D-fructose 6-phosphate-binding residues include threonine 132 and arginine 138. Cysteine 160 is a catalytic residue. 169-174 (NIKQVK) lines the ATP pocket. The beta-D-fructose 6-phosphate site is built by lysine 174, arginine 195, and tyrosine 199. A fructose-2,6-bisphosphatase region spans residues 250–469 (PRAIYLSRHG…AEALVTVPEH (220 aa)). Residue arginine 257 participates in beta-D-fructose 2,6-bisphosphate binding. Catalysis depends on histidine 258, which acts as the Tele-phosphohistidine intermediate. The beta-D-fructose 2,6-bisphosphate site is built by asparagine 264 and glycine 270. Glutamate 327 (proton donor/acceptor) is an active-site residue. Positions 338, 352, 356, 367, 393, and 397 each coordinate beta-D-fructose 2,6-bisphosphate. 349 to 352 (FALR) contributes to the ATP binding site. Residues 393 to 397 (QAVMR) and tyrosine 429 each bind ATP.

This sequence in the C-terminal section; belongs to the phosphoglycerate mutase family. Homodimer. As to expression, liver.

It catalyses the reaction beta-D-fructose 2,6-bisphosphate + H2O = beta-D-fructose 6-phosphate + phosphate. The catalysed reaction is beta-D-fructose 6-phosphate + ATP = beta-D-fructose 2,6-bisphosphate + ADP + H(+). With respect to regulation, phosphorylation results in inhibition of the kinase activity. Its function is as follows. Synthesis and degradation of fructose 2,6-bisphosphate. The polypeptide is 6-phosphofructo-2-kinase/fructose-2,6-bisphosphatase (Gallus gallus (Chicken)).